The sequence spans 273 residues: MTDQIPVVVAGALGRMGAEVIKAVHTAGDCQLVGAIDTCPGREGEDVGLALGLGELEVALTQDFEGALCLASQQHPGAVLVDFTHPKVVYEHTRAAIAYGVTPVIGTTGLAPEQLQELASFAAKASMGGAVIPNFSVGMVLLQQAAAAAARFYDHAELVELHHNRKADAPSGTCIKTAELMEELGKQFNAQEVEEHETLEGSRGGLRPSGLRLHSIRLPGLVAHQEVQFGGAGERYVLRHDTFDRAAYMPGVLLTVRKVRQLGALVYGLERLL.

Residues 11-16 (GALGRM) and 106-108 (GTT) each bind NAD(+). His-162 (proton donor/acceptor) is an active-site residue. Residue His-163 participates in (S)-2,3,4,5-tetrahydrodipicolinate binding. Lys-166 serves as the catalytic Proton donor. 172–173 (GT) lines the (S)-2,3,4,5-tetrahydrodipicolinate pocket.

Belongs to the DapB family.

The protein resides in the cytoplasm. It carries out the reaction (S)-2,3,4,5-tetrahydrodipicolinate + NAD(+) + H2O = (2S,4S)-4-hydroxy-2,3,4,5-tetrahydrodipicolinate + NADH + H(+). It catalyses the reaction (S)-2,3,4,5-tetrahydrodipicolinate + NADP(+) + H2O = (2S,4S)-4-hydroxy-2,3,4,5-tetrahydrodipicolinate + NADPH + H(+). The protein operates within amino-acid biosynthesis; L-lysine biosynthesis via DAP pathway; (S)-tetrahydrodipicolinate from L-aspartate: step 4/4. Its function is as follows. Catalyzes the conversion of 4-hydroxy-tetrahydrodipicolinate (HTPA) to tetrahydrodipicolinate. This Synechococcus sp. (strain RCC307) protein is 4-hydroxy-tetrahydrodipicolinate reductase.